The primary structure comprises 429 residues: UDP-N-acetylglucosamine 1-carboxyvinyltransferase (429 aa).

22–23 (KN) is a binding site for phosphoenolpyruvate. R102 contacts UDP-N-acetyl-alpha-D-glucosamine. Residue C126 is the Proton donor of the active site. C126 carries the post-translational modification 2-(S-cysteinyl)pyruvic acid O-phosphothioketal. UDP-N-acetyl-alpha-D-glucosamine is bound by residues 131–135 (RPVDL), 171–174 (KVSV), D316, and I338.

This sequence belongs to the EPSP synthase family. MurA subfamily.

The protein resides in the cytoplasm. It carries out the reaction phosphoenolpyruvate + UDP-N-acetyl-alpha-D-glucosamine = UDP-N-acetyl-3-O-(1-carboxyvinyl)-alpha-D-glucosamine + phosphate. It participates in cell wall biogenesis; peptidoglycan biosynthesis. In terms of biological role, cell wall formation. Adds enolpyruvyl to UDP-N-acetylglucosamine. The protein is UDP-N-acetylglucosamine 1-carboxyvinyltransferase of Chelativorans sp. (strain BNC1).